The primary structure comprises 434 residues: 5'-deoxyadenosine deaminase (434 aa).

Zn(2+) contacts are provided by His-63 and His-65. 2 residues coordinate substrate: Glu-92 and His-184. Zn(2+) is bound at residue His-211. Positions 214 and 299 each coordinate substrate. Asp-299 contributes to the Zn(2+) binding site.

This sequence belongs to the metallo-dependent hydrolases superfamily. MTA/SAH deaminase family. In terms of assembly, homotetramer. Zn(2+) is required as a cofactor.

The catalysed reaction is 5'-deoxyadenosine + H2O + H(+) = 5'-deoxyinosine + NH4(+). The enzyme catalyses S-adenosyl-L-homocysteine + H2O + H(+) = S-inosyl-L-homocysteine + NH4(+). It catalyses the reaction S-methyl-5'-thioadenosine + H2O + H(+) = S-methyl-5'-thioinosine + NH4(+). It carries out the reaction adenosine + H2O + H(+) = inosine + NH4(+). Its pathway is amino-acid biosynthesis; S-adenosyl-L-methionine biosynthesis. Functionally, catalyzes the deamination of three SAM-derived enzymatic products, namely 5'-deoxyadenosine, S-adenosyl-L-homocysteine, and 5'-methylthioadenosine, to produce the inosine analogs. Can also deaminate adenosine. The preferred substrate for this enzyme is 5'-deoxyadenosine, but all these substrates are efficiently deaminated. Likely functions in a S-adenosyl-L-methionine (SAM) recycling pathway from S-adenosyl-L-homocysteine (SAH) produced from SAM-dependent methylation reactions. May also be involved in the recycling of 5'-deoxyadenosine, whereupon the 5'-deoxyribose moiety of 5'-deoxyinosine is further metabolized to deoxyhexoses used for the biosynthesis of aromatic amino acids in methanogens. This chain is 5'-deoxyadenosine deaminase, found in Methanococcoides burtonii (strain DSM 6242 / NBRC 107633 / OCM 468 / ACE-M).